The following is a 150-amino-acid chain: Ribonuclease pancreatic delta-type (150 aa).

Residues 1-25 form the signal peptide; it reads MGLEKSFILFSLLVLVLGWVQPSLG. Position 35 (arginine 35) interacts with substrate. Histidine 37 acts as the Proton acceptor in catalysis. Disulfide bonds link cysteine 51/cysteine 110, cysteine 65/cysteine 121, cysteine 83/cysteine 136, and cysteine 90/cysteine 98. Substrate-binding positions include 66–70, lysine 91, and arginine 111; that span reads KRVNT. Catalysis depends on histidine 145, which acts as the Proton donor.

Belongs to the pancreatic ribonuclease family. In terms of assembly, monomer.

The protein localises to the secreted. It catalyses the reaction an [RNA] containing cytidine + H2O = an [RNA]-3'-cytidine-3'-phosphate + a 5'-hydroxy-ribonucleotide-3'-[RNA].. The enzyme catalyses an [RNA] containing uridine + H2O = an [RNA]-3'-uridine-3'-phosphate + a 5'-hydroxy-ribonucleotide-3'-[RNA].. Functionally, endonuclease that catalyzes the cleavage of RNA on the 3' side of pyrimidine nucleotides. Acts on single-stranded and double-stranded RNA. The sequence is that of Ribonuclease pancreatic delta-type (Rnase1d) from Rattus norvegicus (Rat).